Consider the following 261-residue polypeptide: Monensin polyketide synthase putative ketoacyl reductase (261 aa).

Residue 10-34 (LVTGATSGIGLATARLLAAQGHLVF) participates in NAD(+) binding. Ser-144 is a binding site for substrate. Tyr-157 acts as the Proton acceptor in catalysis.

The protein belongs to the short-chain dehydrogenases/reductases (SDR) family.

The protein operates within antifungal biosynthesis; monensin biosynthesis. This is Monensin polyketide synthase putative ketoacyl reductase from Streptomyces virginiae (Streptomyces cinnamonensis).